The following is a 360-amino-acid chain: Photosystem II protein D1 (360 aa).

3 helical membrane-spanning segments follow: residues 29–46 (YIGW…AATA), 118–133 (HFLL…QWEL), and 142–156 (WICV…SATA). H118 contacts chlorophyll a. Y126 is a binding site for pheophytin a. Residues D170 and E189 each contribute to the [CaMn4O5] cluster site. The helical transmembrane segment at 197 to 218 (FHMLGVAGVFGGSLFSAMHGSL) threads the bilayer. Residue H198 coordinates chlorophyll a. A quinone contacts are provided by residues H215 and 264–265 (SF). H215 serves as a coordination point for Fe cation. H272 lines the Fe cation pocket. A helical transmembrane segment spans residues 274 to 288 (FLAAWPVVGIWFTAL). [CaMn4O5] cluster is bound by residues H332, E333, D342, and A344. The propeptide occupies 345–360 (AGEVAPVALTAPAING).

The protein belongs to the reaction center PufL/M/PsbA/D family. PSII is composed of 1 copy each of membrane proteins PsbA, PsbB, PsbC, PsbD, PsbE, PsbF, PsbH, PsbI, PsbJ, PsbK, PsbL, PsbM, PsbT, PsbX, PsbY, PsbZ, Psb30/Ycf12, peripheral proteins PsbO, CyanoQ (PsbQ), PsbU, PsbV and a large number of cofactors. It forms dimeric complexes. Requires The D1/D2 heterodimer binds P680, chlorophylls that are the primary electron donor of PSII, and subsequent electron acceptors. It shares a non-heme iron and each subunit binds pheophytin, quinone, additional chlorophylls, carotenoids and lipids. D1 provides most of the ligands for the Mn4-Ca-O5 cluster of the oxygen-evolving complex (OEC). There is also a Cl(-1) ion associated with D1 and D2, which is required for oxygen evolution. The PSII complex binds additional chlorophylls, carotenoids and specific lipids. as cofactor. In terms of processing, tyr-161 forms a radical intermediate that is referred to as redox-active TyrZ, YZ or Y-Z. C-terminally processed by CtpA; processing is essential to allow assembly of the oxygen-evolving complex and thus photosynthetic growth.

It localises to the cellular thylakoid membrane. The catalysed reaction is 2 a plastoquinone + 4 hnu + 2 H2O = 2 a plastoquinol + O2. Photosystem II (PSII) is a light-driven water:plastoquinone oxidoreductase that uses light energy to abstract electrons from H(2)O, generating O(2) and a proton gradient subsequently used for ATP formation. It consists of a core antenna complex that captures photons, and an electron transfer chain that converts photonic excitation into a charge separation. The D1/D2 (PsbA/PsbD) reaction center heterodimer binds P680, the primary electron donor of PSII as well as several subsequent electron acceptors. The chain is Photosystem II protein D1 from Microchaete diplosiphon (Fremyella diplosiphon).